Consider the following 86-residue polypeptide: Triosephosphate isomerase (86 aa).

The active-site Proton acceptor is Glu62.

It belongs to the triosephosphate isomerase family. As to quaternary structure, homodimer.

The catalysed reaction is D-glyceraldehyde 3-phosphate = dihydroxyacetone phosphate. It functions in the pathway carbohydrate biosynthesis; gluconeogenesis. The protein operates within carbohydrate degradation; glycolysis; D-glyceraldehyde 3-phosphate from glycerone phosphate: step 1/1. This chain is Triosephosphate isomerase, found in Platanus orientalis (Oriental plane-tree).